The chain runs to 215 residues: UPF0502 protein YceH (215 aa).

Lys80 is subject to N6-acetyllysine.

The protein belongs to the UPF0502 family.

The polypeptide is UPF0502 protein YceH (Shigella boydii serotype 18 (strain CDC 3083-94 / BS512)).